The following is a 338-amino-acid chain: Holliday junction branch migration complex subunit RuvB (338 aa).

The large ATPase domain (RuvB-L) stretch occupies residues 1 to 181 (MTTRTISPEK…FGVISRLEFY (181 aa)). ATP is bound by residues L20, R21, G62, K65, T66, T67, 128 to 130 (EDF), R171, Y181, and R218. T66 is a Mg(2+) binding site. The small ATPAse domain (RuvB-S) stretch occupies residues 182–252 (TDAELSTIVT…VVDESLKLLE (71 aa)). The interval 255 to 338 (EKGFDQMDRT…APAPGQGALF (84 aa)) is head domain (RuvB-H). DNA-binding residues include R291, R310, and R315.

This sequence belongs to the RuvB family. In terms of assembly, homohexamer. Forms an RuvA(8)-RuvB(12)-Holliday junction (HJ) complex. HJ DNA is sandwiched between 2 RuvA tetramers; dsDNA enters through RuvA and exits via RuvB. An RuvB hexamer assembles on each DNA strand where it exits the tetramer. Each RuvB hexamer is contacted by two RuvA subunits (via domain III) on 2 adjacent RuvB subunits; this complex drives branch migration. In the full resolvosome a probable DNA-RuvA(4)-RuvB(12)-RuvC(2) complex forms which resolves the HJ.

The protein localises to the cytoplasm. The enzyme catalyses ATP + H2O = ADP + phosphate + H(+). In terms of biological role, the RuvA-RuvB-RuvC complex processes Holliday junction (HJ) DNA during genetic recombination and DNA repair, while the RuvA-RuvB complex plays an important role in the rescue of blocked DNA replication forks via replication fork reversal (RFR). RuvA specifically binds to HJ cruciform DNA, conferring on it an open structure. The RuvB hexamer acts as an ATP-dependent pump, pulling dsDNA into and through the RuvAB complex. RuvB forms 2 homohexamers on either side of HJ DNA bound by 1 or 2 RuvA tetramers; 4 subunits per hexamer contact DNA at a time. Coordinated motions by a converter formed by DNA-disengaged RuvB subunits stimulates ATP hydrolysis and nucleotide exchange. Immobilization of the converter enables RuvB to convert the ATP-contained energy into a lever motion, pulling 2 nucleotides of DNA out of the RuvA tetramer per ATP hydrolyzed, thus driving DNA branch migration. The RuvB motors rotate together with the DNA substrate, which together with the progressing nucleotide cycle form the mechanistic basis for DNA recombination by continuous HJ branch migration. Branch migration allows RuvC to scan DNA until it finds its consensus sequence, where it cleaves and resolves cruciform DNA. This is Holliday junction branch migration complex subunit RuvB from Geobacter sulfurreducens (strain ATCC 51573 / DSM 12127 / PCA).